We begin with the raw amino-acid sequence, 127 residues long: Small ribosomal subunit protein eS8 (127 aa).

Belongs to the eukaryotic ribosomal protein eS8 family. In terms of assembly, part of the 30S ribosomal subunit.

This Pyrococcus abyssi (strain GE5 / Orsay) protein is Small ribosomal subunit protein eS8 (rps8e).